The following is a 201-amino-acid chain: Aminoglycoside N(6')-acetyltransferase type 1 (201 aa).

Positions valine 25–glutamine 192 constitute an N-acetyltransferase domain. Positions 51 and 154 each coordinate substrate. Asparagine 159 is an acetyl-CoA binding site.

Homodimer.

It catalyses the reaction kanamycin B + acetyl-CoA = N(6')-acetylkanamycin B + CoA + H(+). Its function is as follows. Catalyzes the transfer of an acetyl group from acetyl-CoA to the 6'-amino group of aminoglycoside molecules conferring resistance to antibiotics containing the purpurosamine ring including amikacin and kanamycin. This Serratia marcescens protein is Aminoglycoside N(6')-acetyltransferase type 1 (aacA4).